The following is a 219-amino-acid chain: C-type lectin domain family 4 member E (219 aa).

The Cytoplasmic portion of the chain corresponds to 1 to 19 (MNSSKSSETQCTERGCFSS). A helical; Signal-anchor for type II membrane protein transmembrane segment spans residues 20–40 (QMFLWTVAGIPILFLSACFIT). Over 41–219 (RCVVTFRIFQ…INPLNKGKSL (179 aa)) the chain is Extracellular. Asn-62 is a glycosylation site (N-linked (GlcNAc...) asparagine). A disulfide bridge connects residues Cys-80 and Cys-91. Residues 87-206 (FQSSCYFFST…CFLNYFRICE (120 aa)) enclose the C-type lectin domain. Asn-107 carries N-linked (GlcNAc...) asparagine glycosylation. 2 disulfides stabilise this stretch: Cys-108-Cys-205 and Cys-179-Cys-197. Ca(2+)-binding residues include Val-117, Asn-119, Glu-123, Glu-169, Asn-171, Asn-193, Asp-194, and Glu-206. Positions 169 to 171 (EPN) match the Confers specificity for glucose/mannose-type carbohydrates motif.

In terms of assembly, monomer and homodimer. Interacts with signaling adapter Fc receptor gamma chain/FCER1G to form a functional complex; the interaction is direct. Alternatively, acts as a bridge for interaction between CLEC4D and FCER1G. A heterodimer of CLEC4E and CLEC4D associates with FCER1G to form a functional complex. Interacts with SAP130 nuclear protein that is released from necrotic cells; the interaction is direct. In terms of tissue distribution, expressed in monocytes and macrophages.

The protein localises to the cell membrane. It localises to the cell projection. The protein resides in the phagocytic cup. In terms of biological role, calcium-dependent lectin that acts as a pattern recognition receptor (PRR) of the innate immune system: recognizes damage-associated molecular patterns (DAMPs) of abnormal self and pathogen-associated molecular patterns (PAMPs) of bacteria and fungi. The PAMPs notably include mycobacterial trehalose 6,6'-dimycolate (TDM), a cell wall glycolipid with potent adjuvant immunomodulatory functions. Interacts with signaling adapter Fc receptor gamma chain/FCER1G to form a functional complex in myeloid cells. Binding of mycobacterial trehalose 6,6'-dimycolate (TDM) to this receptor complex leads to phosphorylation of the immunoreceptor tyrosine-based activation motif (ITAM) of FCER1G, triggering activation of SYK, CARD9 and NF-kappa-B, consequently driving maturation of antigen-presenting cells and shaping antigen-specific priming of T-cells toward effector T-helper 1 and T-helper 17 cell subtypes. Also recognizes alpha-mannose residues on pathogenic fungi of the genus Malassezia and mediates macrophage activation. Through recognition of DAMPs released upon nonhomeostatic cell death, enables immune sensing of damaged self and promotes inflammatory cell infiltration into the damaged tissue. The chain is C-type lectin domain family 4 member E from Homo sapiens (Human).